A 265-amino-acid polypeptide reads, in one-letter code: Glutamate racemase (265 aa).

Substrate is bound by residues 10 to 11 (DS) and 42 to 43 (YG). Catalysis depends on cysteine 73, which acts as the Proton donor/acceptor. Residue 74–75 (NT) coordinates substrate. Cysteine 183 functions as the Proton donor/acceptor in the catalytic mechanism. Residue 184 to 185 (TH) participates in substrate binding.

This sequence belongs to the aspartate/glutamate racemases family.

It catalyses the reaction L-glutamate = D-glutamate. Its pathway is cell wall biogenesis; peptidoglycan biosynthesis. In terms of biological role, provides the (R)-glutamate required for cell wall biosynthesis. This chain is Glutamate racemase, found in Corynebacterium diphtheriae (strain ATCC 700971 / NCTC 13129 / Biotype gravis).